Consider the following 181-residue polypeptide: MASLTSLIFVSIVTAAHGQTVVSIPLGHNYTLIGPPITSEVIWTKLGSVDYFDIICNKTKPIIVTCNIQNLTLINVSKVYSGYYYGYDRYSSQYRNYLVRVTQLKTTKMPNMAKIRSDDNSLETFTSPTTPDEKNIPDSMIAIVAAVAVVMALIIICMLLYACRYKKFHPKKQDLLLRLNI.

Asn-29, Asn-57, Asn-70, and Asn-75 each carry an N-linked (GlcNAc...) asparagine; by host glycan.

It belongs to the adenoviridae E3_20 family.

Functionally, E3 proteins seem to be dispensable for virus growth in tissue culture cells. They are potentially important for virus growth under special conditions; E3 region may help adenoviruses to evade the immune surveillance of the host. The protein is Early E3 20.3 kDa glycoprotein of Homo sapiens (Human).